We begin with the raw amino-acid sequence, 546 residues long: Chaperonin GroEL (546 aa).

Residues 30-33 (TLGP), Lys51, 87-91 (DGTTT), Gly415, 479-481 (NAA), and Asp495 each bind ATP. The interval 527 to 546 (EEKPDVSASSGGMGGMGGMM) is disordered. Positions 537–546 (GGMGGMGGMM) are enriched in gly residues.

Belongs to the chaperonin (HSP60) family. Forms a cylinder of 14 subunits composed of two heptameric rings stacked back-to-back. Interacts with the co-chaperonin GroES.

It localises to the cytoplasm. The enzyme catalyses ATP + H2O + a folded polypeptide = ADP + phosphate + an unfolded polypeptide.. Its function is as follows. Together with its co-chaperonin GroES, plays an essential role in assisting protein folding. The GroEL-GroES system forms a nano-cage that allows encapsulation of the non-native substrate proteins and provides a physical environment optimized to promote and accelerate protein folding. The chain is Chaperonin GroEL from Baumannia cicadellinicola subsp. Homalodisca coagulata.